A 355-amino-acid polypeptide reads, in one-letter code: Peptide chain release factor 1 (355 aa).

Gln-232 carries the post-translational modification N5-methylglutamine. A disordered region spans residues 282-309 (EQNASISAERKSQVGSGDRSERIRTYNY). Over residues 289 to 305 (AERKSQVGSGDRSERIR) the composition is skewed to basic and acidic residues.

Belongs to the prokaryotic/mitochondrial release factor family. Methylated by PrmC. Methylation increases the termination efficiency of RF1.

The protein localises to the cytoplasm. In terms of biological role, peptide chain release factor 1 directs the termination of translation in response to the peptide chain termination codons UAG and UAA. In Desulfatibacillum aliphaticivorans, this protein is Peptide chain release factor 1.